The primary structure comprises 465 residues: MESLRIYNTLARDKQTFVPLQDGVVRMYVCGMTVYDYCHVGHARVMVVFDIVQRWLRTLGYNVTYVRNITDIDDKIIRRAVENGETIKSLTDRFIKALHEDADALGIQRPDIEPRATDFIPQMLGMIERLEANGYAYQASDGDVNYAVRKFANYGKLSGKSLEDLRAGERVAANDAKQDPLDFVLWKQAKPQEPADTGWDSKYGRGRPGWHIECSAMGCTLLGEHFDIHGGGQDLQFPHHENEIAQSEAATGQTFVNFWMHNGYVQIDNEKMSKSLNNFFTIREVLAQYDAEVVRFFIARAHYRSPLNYSDVHIDDARNALTRLYTALKDVTPDGAELDWNEAYAQRFQAAMNDDFNTPVAVSVLFELASEVNRTRDPALARQLRLLGAVIGLLGREPRAYLQQAAGAAAVGALEAAAIEAKIAARAAAKQAKDFAAADRIRSELLEAGVALEDKPGGLTEWRRV.

Cys-30 is a Zn(2+) binding site. Residues Met-32 to His-42 carry the 'HIGH' region motif. Zn(2+) contacts are provided by Cys-214, His-239, and Glu-243. The 'KMSKS' region motif lies at Lys-271 to Ser-275. Lys-274 provides a ligand contact to ATP.

Belongs to the class-I aminoacyl-tRNA synthetase family. In terms of assembly, monomer. Requires Zn(2+) as cofactor.

The protein resides in the cytoplasm. It catalyses the reaction tRNA(Cys) + L-cysteine + ATP = L-cysteinyl-tRNA(Cys) + AMP + diphosphate. This chain is Cysteine--tRNA ligase, found in Paraburkholderia xenovorans (strain LB400).